Consider the following 437-residue polypeptide: MTHYHFVGIKGSGMSSLAQIMHDLGHEVQGSDIESYVFTEVALRNKGIKILPFDANNITKEMVVIQGNAFPDNHEEIVRAHELKLDIIKYHDFLGHVINQYTSVAVTGAHGKTSTTGLLSHVMNGDKKTSFLIGDGTGMGLPGSDYFAFEACEYRRHFLSYHPDYAIMTNIDFDHPDYFKNIDDVYDAFQHMALNVKKGIIAWGDDEYLRKLDVDIPVYYYGFKETDDIYAKNIQITEKGTQFDVYIKGEFYDQFLSPQYGNHNILNALAVIAISYLEDMNVENIKEALITFGGVKRRFNETKVSNQVIVDDYAHHPREISATIETARKKYPQKDVVAVFQPHTFSRTQAFLNEFAESLSKADQVFLCEIFGSIRENTGDLTIEDLINRIDGSTLIDENSIDVLEKFDNAVILFMGAGDIQKLLKAYFEKLGVKNDF.

108-114 (GAHGKTS) is an ATP binding site.

It belongs to the MurCDEF family.

The protein localises to the cytoplasm. It carries out the reaction UDP-N-acetyl-alpha-D-muramate + L-alanine + ATP = UDP-N-acetyl-alpha-D-muramoyl-L-alanine + ADP + phosphate + H(+). Its pathway is cell wall biogenesis; peptidoglycan biosynthesis. Its function is as follows. Cell wall formation. The chain is UDP-N-acetylmuramate--L-alanine ligase from Staphylococcus epidermidis (strain ATCC 12228 / FDA PCI 1200).